The following is a 109-amino-acid chain: Nucleoid-associated protein HD_0326 (109 aa).

The protein belongs to the YbaB/EbfC family. In terms of assembly, homodimer.

It is found in the cytoplasm. Its subcellular location is the nucleoid. Binds to DNA and alters its conformation. May be involved in regulation of gene expression, nucleoid organization and DNA protection. The protein is Nucleoid-associated protein HD_0326 of Haemophilus ducreyi (strain 35000HP / ATCC 700724).